Here is a 433-residue protein sequence, read N- to C-terminus: 5-methylthioadenosine/S-adenosylhomocysteine deaminase (433 aa).

The Zn(2+) site is built by His-67 and His-69. Positions 96, 148, and 187 each coordinate substrate. A Zn(2+)-binding site is contributed by His-214. Substrate-binding residues include Glu-217 and Asp-302. Asp-302 serves as a coordination point for Zn(2+).

It belongs to the metallo-dependent hydrolases superfamily. MTA/SAH deaminase family. The cofactor is Zn(2+).

The catalysed reaction is S-adenosyl-L-homocysteine + H2O + H(+) = S-inosyl-L-homocysteine + NH4(+). The enzyme catalyses S-methyl-5'-thioadenosine + H2O + H(+) = S-methyl-5'-thioinosine + NH4(+). Catalyzes the deamination of 5-methylthioadenosine and S-adenosyl-L-homocysteine into 5-methylthioinosine and S-inosyl-L-homocysteine, respectively. Is also able to deaminate adenosine. The chain is 5-methylthioadenosine/S-adenosylhomocysteine deaminase from Carboxydothermus hydrogenoformans (strain ATCC BAA-161 / DSM 6008 / Z-2901).